The sequence spans 177 residues: uncharacterized protein (177 aa).

Its subcellular location is the plastid. The protein resides in the chloroplast. This is an uncharacterized protein from Chlorella vulgaris (Green alga).